A 224-amino-acid chain; its full sequence is Biotin transport ATP-binding protein BioM (224 aa).

The ABC transporter domain occupies 3 to 224 (IQFESAGVSF…AIARYREIAA (222 aa)). 34–41 (GLNGSGKT) serves as a coordination point for ATP.

The protein belongs to the ABC transporter superfamily. Part of a biotin transporter complex composed of BioM, BioN and BioY.

Its subcellular location is the cell inner membrane. Involved in biotin uptake. The protein is Biotin transport ATP-binding protein BioM (bioM) of Rhizobium etli (strain ATCC 51251 / DSM 11541 / JCM 21823 / NBRC 15573 / CFN 42).